A 248-amino-acid chain; its full sequence is Tropomyosin alpha-4 chain (248 aa).

Ala2 is modified (N-acetylalanine). Positions 2–248 (AGLNSLEAVK…DQTLDELNCI (247 aa)) form a coiled coil. Ser6 carries the phosphoserine modification. The interval 16–47 (ALQQQADEAEDRAQGLQRELDGERERREKAEG) is disordered. Residues 33-47 (RELDGERERREKAEG) are compositionally biased toward basic and acidic residues. 2 positions are modified to N6-acetyllysine: Lys177 and Lys215. At Thr216 the chain carries Phosphothreonine.

It belongs to the tropomyosin family. In terms of assembly, homodimer. Heterodimer of an alpha (TPM1, TPM3 or TPM4) and a beta (TPM2) chain.

The protein resides in the cytoplasm. Its subcellular location is the cytoskeleton. Binds to actin filaments in muscle and non-muscle cells. Plays a central role, in association with the troponin complex, in the calcium dependent regulation of vertebrate striated muscle contraction. Smooth muscle contraction is regulated by interaction with caldesmon. In non-muscle cells is implicated in stabilizing cytoskeleton actin filaments. Binds calcium. This is Tropomyosin alpha-4 chain (TPM4) from Equus caballus (Horse).